We begin with the raw amino-acid sequence, 135 residues long: Small ribosomal subunit protein uS12 (135 aa).

D89 carries the post-translational modification 3-methylthioaspartic acid. The interval D103–R135 is disordered. Over residues M111–K123 the composition is skewed to basic residues. A compositionally biased stretch (low complexity) spans P124–R135.

This sequence belongs to the universal ribosomal protein uS12 family. As to quaternary structure, part of the 30S ribosomal subunit. Contacts proteins S8 and S17. May interact with IF1 in the 30S initiation complex.

In terms of biological role, with S4 and S5 plays an important role in translational accuracy. Interacts with and stabilizes bases of the 16S rRNA that are involved in tRNA selection in the A site and with the mRNA backbone. Located at the interface of the 30S and 50S subunits, it traverses the body of the 30S subunit contacting proteins on the other side and probably holding the rRNA structure together. The combined cluster of proteins S8, S12 and S17 appears to hold together the shoulder and platform of the 30S subunit. The chain is Small ribosomal subunit protein uS12 from Gloeobacter violaceus (strain ATCC 29082 / PCC 7421).